Reading from the N-terminus, the 425-residue chain is MPASLVVGTQWGDEGKAKVIDFLSKDTDIIVRYQGGANAGHTVVVHGKKYVFHLVPSGVIYDQTICVIGNGVVLDPLFFIEECDRLQKEGFPVFDKLLLSDACHLLFPYHSQIDSARETTLSQEHKIGTTKKGIGICYADKMMRTGLRVGDLLDTSYQTRLKHLVDEKNRELDKLYGMPPVSYNDINEGLKFFLSKVKKNIINTAYYLDTELKKGKRVLLEGAQGTGLDVDFGTYPYVTSSNPTTGGALIGTGIPFQHLKHVIGITKAYTTRVGEGPFPTELLGEAGEKLRQKGGEFGATTGRPRRCGWFDVEMLKHSVRINGITSIALTKIDILSDYDTIPVATGYKLNGKTLDCFPSQGLDKVEVIYEEFPGWKSDISGICEFQKLPEKCKNYISALEKWIGVKINLVSTGPDRKDTIHGDSF.

GTP is bound by residues 12 to 18 (GDEGKAK) and 40 to 42 (GHT). D13 (proton acceptor) is an active-site residue. Positions 13 and 40 each coordinate Mg(2+). Residues 13 to 16 (DEGK), 38 to 41 (NAGH), T130, R144, Q224, T239, and R303 each bind IMP. Residue H41 is the Proton donor of the active site. 299-305 (ATTGRPR) contacts substrate. GTP is bound by residues R305, 331 to 333 (KID), and 411 to 413 (STG).

Belongs to the adenylosuccinate synthetase family. As to quaternary structure, homodimer. The cofactor is Mg(2+).

It is found in the cytoplasm. The enzyme catalyses IMP + L-aspartate + GTP = N(6)-(1,2-dicarboxyethyl)-AMP + GDP + phosphate + 2 H(+). It functions in the pathway purine metabolism; AMP biosynthesis via de novo pathway; AMP from IMP: step 1/2. Functionally, plays an important role in the de novo pathway of purine nucleotide biosynthesis. Catalyzes the first committed step in the biosynthesis of AMP from IMP. In Leptospira interrogans serogroup Icterohaemorrhagiae serovar copenhageni (strain Fiocruz L1-130), this protein is Adenylosuccinate synthetase.